Consider the following 291-residue polypeptide: Elongation factor Ts (291 aa).

The segment at 80 to 83 is involved in Mg(2+) ion dislocation from EF-Tu; sequence TDFV.

The protein belongs to the EF-Ts family.

The protein localises to the cytoplasm. Associates with the EF-Tu.GDP complex and induces the exchange of GDP to GTP. It remains bound to the aminoacyl-tRNA.EF-Tu.GTP complex up to the GTP hydrolysis stage on the ribosome. The sequence is that of Elongation factor Ts from Ligilactobacillus salivarius (strain UCC118) (Lactobacillus salivarius).